An 87-amino-acid chain; its full sequence is Cell division topological specificity factor (87 aa).

Belongs to the MinE family.

Prevents the cell division inhibition by proteins MinC and MinD at internal division sites while permitting inhibition at polar sites. This ensures cell division at the proper site by restricting the formation of a division septum at the midpoint of the long axis of the cell. This Leptothrix cholodnii (strain ATCC 51168 / LMG 8142 / SP-6) (Leptothrix discophora (strain SP-6)) protein is Cell division topological specificity factor.